Here is a 250-residue protein sequence, read N- to C-terminus: MGLLFNNLIMNFDAPSPWGIYFQDSATPQMEGLVELHDNIMYYLVVILFGVGWILLSIIRNYISTKSPISHKYLNHGTLIELIWTITPAVILILIAFPSFKLLYLMDEVSDPSMSVLAEGHQWYWSYQYPDFLDSNDEFIEFDSYIVPESDLEEGALRMLEVDNRVILPELTHVRFIITAGDVIHSFAVPSLGVKCDAYPGRLNQVSVFINREGVFYGQCSEICGILHSSMPIVIESVSLEKFLTWLEEQ.

At 1–27 (MGLLFNNLIMNFDAPSPWGIYFQDSAT) the chain is on the mitochondrial intermembrane side. Residues 28–61 (PQMEGLVELHDNIMYYLVVILFGVGWILLSIIRN) form a helical membrane-spanning segment. Residues 62–77 (YISTKSPISHKYLNHG) lie on the Mitochondrial matrix side of the membrane. The helical transmembrane segment at 78–107 (TLIELIWTITPAVILILIAFPSFKLLYLMD) threads the bilayer. The Mitochondrial intermembrane segment spans residues 108 to 250 (EVSDPSMSVL…EKFLTWLEEQ (143 aa)). The Cu cation site is built by histidine 185, cysteine 220, glutamate 222, cysteine 224, histidine 228, and methionine 231. Glutamate 222 contacts Mg(2+).

This sequence belongs to the cytochrome c oxidase subunit 2 family. As to quaternary structure, component of the cytochrome c oxidase (complex IV, CIV), a multisubunit enzyme composed of 11 subunits. The complex is composed of a catalytic core of 3 subunits Cox1, Cox2 and Cox3, encoded in the mitochondrial DNA, and 8 supernumerary subunits Cox4, Cox5a/Cox5, Cox6, Cox7, Cox8, Cox7a/Cox9, Cox6b/Cox12 and Cox6a/Cox13, which are encoded in the nuclear genome. The complex exists as a monomer or a dimer and forms respiratory supercomplexes (SCs) in the inner mitochondrial membrane with NADH-ubiquinone oxidoreductase (complex I, CI) and ubiquinol-cytochrome c oxidoreductase (cytochrome b-c1 complex, complex III, CIII), resulting in various different assemblies (supercomplexes I(1)IV(1), I(1)III(3)IV(2), III(2)IV(1) and III(2)IV(2) as well as larger supercomplexes of compositions like I(1)III(2)IV(5-6)). Cu cation serves as cofactor.

The protein resides in the mitochondrion inner membrane. It carries out the reaction 4 Fe(II)-[cytochrome c] + O2 + 8 H(+)(in) = 4 Fe(III)-[cytochrome c] + 2 H2O + 4 H(+)(out). Functionally, component of the cytochrome c oxidase, the last enzyme in the mitochondrial electron transport chain which drives oxidative phosphorylation. The respiratory chain contains 3 multisubunit complexes succinate dehydrogenase (complex II, CII), ubiquinol-cytochrome c oxidoreductase (cytochrome b-c1 complex, complex III, CIII) and cytochrome c oxidase (complex IV, CIV), that cooperate to transfer electrons derived from NADH and succinate to molecular oxygen, creating an electrochemical gradient over the inner membrane that drives transmembrane transport and the ATP synthase. Cytochrome c oxidase is the component of the respiratory chain that catalyzes the reduction of oxygen to water. Electrons originating from reduced cytochrome c in the intermembrane space (IMS) are transferred via the dinuclear copper A center (CU(A)) of Cox2 and heme A of Cox1 to the active site in Cox1, a binuclear center (BNC) formed by heme A3 and copper B (CU(B)). The BNC reduces molecular oxygen to 2 water molecules using 4 electrons from cytochrome c in the IMS and 4 protons from the mitochondrial matrix. The chain is Cytochrome c oxidase subunit 2 (cox-2) from Neurospora crassa (strain ATCC 24698 / 74-OR23-1A / CBS 708.71 / DSM 1257 / FGSC 987).